Here is a 1561-residue protein sequence, read N- to C-terminus: Formin-E (1561 aa).

Low complexity predominate over residues 1–28 (MDNHSSSSNPSSLSSSSSSSSSSSSFLS). 4 disordered regions span residues 1 to 63 (MDNH…EEKP), 77 to 187 (EEEE…GKLS), 211 to 279 (PIIV…SSED), and 305 to 365 (ILRS…NLNY). Residues 29–51 (DHVKKEEQNGLDTIKEEIENKIE) are compositionally biased toward basic and acidic residues. The stretch at 32–85 (KKEEQNGLDTIKEEIENKIENEEEEEKIEEKPIEKVEEEKIIVQKEEEEKIEEE) forms a coiled coil. The segment covering 80-89 (EKIEEEPIEK) has biased composition (acidic residues). The segment covering 103 to 120 (DNINTTVEAKTLETSTEP) has biased composition (polar residues). A coiled-coil region spans residues 158 to 208 (EQQEQQEKQKEETKPSIREEVKEKIKGKLSEIKEEIKDIKEEIKHVIREEV). Residues 162–187 (QQEKQKEETKPSIREEVKEKIKGKLS) are compositionally biased toward basic and acidic residues. Residues 220–229 (SPPPPPPPPS) are compositionally biased toward pro residues. The segment covering 230-258 (ITVQSSSPVSSQISSPVSSPVSSPKPSVT) has biased composition (low complexity). The segment covering 305-320 (ILRSKSSPNPGANNPN) has biased composition (polar residues). The segment covering 326-365 (NNSSSSSSSNNNSDNNNNSDNNSNNNNINNNNSSSNNLNY) has biased composition (low complexity). The Phorbol-ester/DAG-type zinc-finger motif lies at 379–427 (YHDFKIHRGTSSCVYCGENTRLWSTSYKCFFCGVVCHKKCLDSMNTIPC). Residues 465–534 (PSSITNSSSK…TSISSPPIAS (70 aa)) show a composition bias toward low complexity. Positions 465 to 549 (PSSITNSSSK…PLLQQQQQQQ (85 aa)) are disordered. Residues 541–573 (LLQQQQQQQQQQQQQQQQQQQQQQQQQQISTTQ) are a coiled coil. Residues 581–929 (SEKPDDDMIN…QISLHKGGFE (349 aa)) form the GBD/FH3 domain. Positions 952–989 (LNRKLGELEKQNIDKAMKIQEQDINIKSLLDLLKQLKD) form a coiled coil. 3 disordered regions span residues 1009-1092 (MEPP…VPKP), 1466-1508 (EEKR…SDED), and 1526-1561 (RQAK…PNKN). The segment covering 1017–1033 (SVKSPDDPNNAAPIVVA) has biased composition (low complexity). Positions 1019 to 1081 (KSPDDPNNAA…LGAKKPPAGV (63 aa)) constitute an FH1 domain. Positions 1034-1070 (PIPPPPPPISGAPPPPPPPPPPMKGGAGPPPPPPPPG) are enriched in pro residues. Residues 1071-1081 (KLGAKKPPAGV) are compositionally biased toward low complexity. Positions 1086–1475 (PPKVPKPSHP…EEKRLQQKQQ (390 aa)) constitute an FH2 domain. Residues 1398-1491 (LATASTEVEK…RKLTTSNESA (94 aa)) are a coiled coil. The segment covering 1466-1481 (EEKRLQQKQQRQERAV) has biased composition (basic and acidic residues). 2 stretches are compositionally biased toward polar residues: residues 1484–1498 (LTTS…PNHA) and 1536–1561 (HQIA…PNKN). Residues 1488-1518 (NESASASPNHAKSTDDKSDEDDDIVNDLLMA) enclose the DAD domain.

It belongs to the formin homology family. Diaphanous subfamily. In terms of assembly, interacts (via GBD/FH3 domain) with activated Rho-GTPases.

Functionally, formins play an important role in the nucleation of actin and the formation of linear actin filaments. The sequence is that of Formin-E (forE) from Dictyostelium discoideum (Social amoeba).